Reading from the N-terminus, the 129-residue chain is MEHKRLLKVRRRQKARKPEFRRYCWNKKLRLRNKSWRRPRGLFNKLRKRYGGKWSGRIPVNVGFGSPKAVRGLHPSGYEEVLVYNPADLEKIDKERQAVRIASCVGMKKRLAIEDKAKELGIKVLNPSG.

The protein belongs to the eukaryotic ribosomal protein eL32 family.

This chain is Large ribosomal subunit protein eL32 (rpl32e), found in Archaeoglobus fulgidus (strain ATCC 49558 / DSM 4304 / JCM 9628 / NBRC 100126 / VC-16).